The primary structure comprises 621 residues: 1-deoxy-D-xylulose-5-phosphate synthase (621 aa).

Thiamine diphosphate contacts are provided by residues His80 and 121–123; that span reads GHS. Asp152 provides a ligand contact to Mg(2+). Residues 153–154, Asn181, Tyr288, and Glu370 contribute to the thiamine diphosphate site; that span reads GA. Position 181 (Asn181) interacts with Mg(2+).

This sequence belongs to the transketolase family. DXPS subfamily. As to quaternary structure, homodimer. Mg(2+) serves as cofactor. Thiamine diphosphate is required as a cofactor.

It catalyses the reaction D-glyceraldehyde 3-phosphate + pyruvate + H(+) = 1-deoxy-D-xylulose 5-phosphate + CO2. The protein operates within metabolic intermediate biosynthesis; 1-deoxy-D-xylulose 5-phosphate biosynthesis; 1-deoxy-D-xylulose 5-phosphate from D-glyceraldehyde 3-phosphate and pyruvate: step 1/1. In terms of biological role, catalyzes the acyloin condensation reaction between C atoms 2 and 3 of pyruvate and glyceraldehyde 3-phosphate to yield 1-deoxy-D-xylulose-5-phosphate (DXP). This chain is 1-deoxy-D-xylulose-5-phosphate synthase, found in Vibrio vulnificus (strain CMCP6).